Reading from the N-terminus, the 221-residue chain is Small ribosomal subunit protein uS5 (221 aa).

The interval 1–40 is disordered; it reads MMAQRNSGAPDNAGGSNDGREGGRGRRDNRDDRRGGRDNA. A compositionally biased stretch (basic and acidic residues) spans 18 to 40; that stretch reads DGREGGRGRRDNRDDRRGGRDNA. In terms of domain architecture, S5 DRBM spans 45 to 108; sequence YLERVVTINR…DEARKNFFRV (64 aa).

Belongs to the universal ribosomal protein uS5 family. Part of the 30S ribosomal subunit. Contacts proteins S4 and S8.

Functionally, with S4 and S12 plays an important role in translational accuracy. In terms of biological role, located at the back of the 30S subunit body where it stabilizes the conformation of the head with respect to the body. This chain is Small ribosomal subunit protein uS5, found in Mycobacteroides abscessus (strain ATCC 19977 / DSM 44196 / CCUG 20993 / CIP 104536 / JCM 13569 / NCTC 13031 / TMC 1543 / L948) (Mycobacterium abscessus).